The following is a 680-amino-acid chain: WD repeat-containing protein 48 homolog (680 aa).

WD repeat units lie at residues 26 to 65, 71 to 110, 113 to 152, 164 to 203, 206 to 245, 248 to 287, 290 to 329, and 350 to 389; these read QHRN…SEKY, HHND…CMST, THRD…ALTA, GSKD…RSMK, GHTE…CVQT, VHKE…NKTL, EEKA…RGTL, and KGGA…KKDT. Residues 594–618 form a disordered region; the sequence is TPSGANANNSLQNSQSDGNSEGSQL. Low complexity predominate over residues 596 to 609; that stretch reads SGANANNSLQNSQS.

This sequence belongs to the WD repeat WDR48 family. Catalytic component of the Usp12-46 deubiquitylase complex consisting of Usp12-46, Wdr20 and Uaf1; regulatory subunit that, together wtih Wdr20, stabilizes Usp12-46. The Usp12-46 deubiquitylase complex associates with arr/arrow; the interaction leads to deubiquitination and stabilization of arr/arrow.

Functionally, regulatory component of the Usp12-46 deubiquitylase complex. activates deubiquitination by increasing the catalytic turnover without increasing the affinity of deubiquitinating enzymes for the substrate. The complex deubiquitylates the wg/wingless-signaling receptor arr/arrow, which stabilizes the receptor and increases its concentration at the cell surface; this enhances the sensitivity of cells to wg/wingless-signal stimulation. This increases the amplitude and spatial range of the signaling response to the wg/wingless morphogen gradient, facilitating the precise concentration-dependent regulation of its target genes. Together with Wdr20 and Usp12-46 required for wg/wingless-mediated signaling in the wing imaginal disc and for wg/wingless-dependent regulation of intestinal stem cell proliferation. The sequence is that of WD repeat-containing protein 48 homolog from Drosophila persimilis (Fruit fly).